We begin with the raw amino-acid sequence, 3010 residues long: Genome polyprotein (3010 aa).

At S2 the chain carries N-acetylserine; by host. The tract at residues 2 to 23 is interaction with STAT1; the sequence is STNPKPQRKTKRNTNRRPQDVK. Residues 2 to 58 are interaction with EIF2AK2/PKR; the sequence is STNPKPQRKTKRNTNRRPQDVKFPGGGQIVGGVYLLPRRGPRLGVRATRKTSERSQP. Positions 2-59 are interaction with DDX3X; that stretch reads STNPKPQRKTKRNTNRRPQDVKFPGGGQIVGGVYLLPRRGPRLGVRATRKTSERSQPR. The interval 2–75 is disordered; that stretch reads STNPKPQRKT…PKARQPEGRA (74 aa). Residues 2–168 are Cytoplasmic-facing; sequence STNPKPQRKT…EDGVNYATGN (167 aa). 2 short sequence motifs (nuclear localization signal) span residues 5–13 and 38–43; these read PKPQRKTKR and PRRGPR. Positions 7 to 16 are enriched in basic residues; the sequence is PQRKTKRNTN. Residues 32–47 are compositionally biased toward low complexity; it reads GGVYLLPRRGPRLGVR. S53 is modified (phosphoserine; by host). 2 consecutive short sequence motifs (nuclear localization signal) follow at residues 58-64 and 66-71; these read PRGRRQP and PKARQP. S99 is modified (phosphoserine; by host). The important for endoplasmic reticulum and mitochondrial localization stretch occupies residues 112–152; that stretch reads PRRRSRNLGKVIDTLTCGFADLMGYIPLVGAPLGGVARALA. At S116 the chain carries Phosphoserine; by host PKA. Residues 122 to 173 are interaction with APOA2; the sequence is VIDTLTCGFADLMGYIPLVGAPLGGVARALAHGVRVVEDGVNYATGNLPGCS. The interval 164-167 is important for lipid droplets localization; sequence YATG. A helical transmembrane segment spans residues 169–189; it reads LPGCSFSIFLLALLSCLTIPA. Residues 178–191 constitute a propeptide, ER anchor for the core protein, removed in mature form by host signal peptidase; sequence LLALLSCLTIPASA. Over 190–358 the chain is Lumenal; sequence SAYEVRNVSG…AGAHWGVLAG (169 aa). N-linked (GlcNAc...) asparagine; by host glycosylation is found at N196, N209, N234, and N250. Residues 265-296 are important for fusion; that stretch reads LVGAAAFCSAMYVGDLCGSVFLVSQLFTFSPR. N305 carries an N-linked (GlcNAc...) asparagine; by host glycan. A helical membrane pass occupies residues 359-379; it reads LAYYSMVGNWAKVLIVMLLFA. Topologically, residues 380–725 are lumenal; sequence GVDGETRVTG…WDYIVILFLL (346 aa). An HVR1 region spans residues 385 to 411; sequence TRVTGGQIARNAYSLTTLFSSGSAQNI. N-linked (GlcNAc...) (high mannose) asparagine; by host glycosylation is found at N417, N423, N430, and N448. Intrachain disulfides connect C429–C552, C452–C459, C486–C494, and C503–C508. The HVR2 stretch occupies residues 474–479; it reads YAEQGG. The segment at 480–493 is CD81-binding 1; sequence QDQRPYCWHYAPKP. An N-linked (GlcNAc...) (high mannose) asparagine; by host glycan is attached at N532. An N-linked (GlcNAc...) asparagine; by host glycan is attached at N540. Residues 544–551 are CD81-binding 2; the sequence is PPQGNWFG. N556 carries N-linked (GlcNAc...) (high mannose) asparagine; by host glycosylation. C564 and C569 are oxidised to a cystine. A glycan (N-linked (GlcNAc...) (high mannose) asparagine; by host) is linked at N576. 3 disulfides stabilise this stretch: C581–C585, C597–C620, and C607–C644. N-linked (GlcNAc...) (high mannose) asparagine; by host glycans are attached at residues N623 and N645. The cysteines at positions 652 and 677 are disulfide-linked. The PKR/eIF2-alpha phosphorylation homology domain (PePHD) stretch occupies residues 660–671; sequence LELSPLLLSTTE. The chain crosses the membrane as a helical span at residues 726–746; that stretch reads LADARVCACLWMMLLIAQAEA. Residues 747-757 are Lumenal-facing; the sequence is ALENLVVLNAA. Residues 758 to 778 traverse the membrane as a helical segment; it reads SVAGAHGILSFLVFFCAAWYI. The Cytoplasmic portion of the chain corresponds to 779 to 781; that stretch reads KGK. The chain crosses the membrane as a helical span at residues 782–803; that stretch reads LVPGAAYAFYGVWPLLLLLLAL. Residues 804–813 lie on the Lumenal side of the membrane; sequence PPRAYAMERE. A helical membrane pass occupies residues 814–834; that stretch reads MAASCGGAVFVGLVLLTLSPY. The Cytoplasmic portion of the chain corresponds to 835–838; the sequence is YKEF. The chain crosses the membrane as a helical span at residues 839–859; that stretch reads LARLIWWLQYFITRAEAHLQV. The Lumenal portion of the chain corresponds to 860 to 881; sequence WIPPLNIRGGRDAIILLACVVH. Residues 882-902 form a helical membrane-spanning segment; the sequence is PELIFDITKLLLAILGPLMVL. Residues 903 to 1026 enclose the Peptidase C18 domain; the sequence is QASITQVPYF…SLEGQGWRLL (124 aa). The Cytoplasmic portion of the chain corresponds to 903–1657; that stretch reads QASITQVPYF…CMSADLEVVT (755 aa). Residues 904-1206 form a protease NS2-3 region; the sequence is ASITQVPYFV…PVESMETTMR (303 aa). The S-palmitoyl cysteine; by host moiety is linked to residue C922. Residues 929-949 are interaction with host SCPS1; the sequence is AGGHYVQMAFVKLTALTGTYV. Active-site for protease NS2 activity; shared with dimeric partner residues include H952, E972, and C993. In terms of domain architecture, Peptidase S29 spans 1027 to 1208; the sequence is APITAYSQQT…ESMETTMRSP (182 aa). Residues H1083 and D1107 each act as charge relay system; for serine protease NS3 activity in the active site. Positions 1123 and 1125 each coordinate Zn(2+). S1165 (charge relay system; for serine protease NS3 activity) is an active-site residue. Zn(2+) contacts are provided by C1171 and H1175. Residues 1217–1369 form the Helicase ATP-binding domain; that stretch reads PAVPQTFQVA…PNIEEVALSN (153 aa). ATP is bound at residue 1230 to 1237; the sequence is APTGSGKS. Positions 1237 and 1317 each coordinate Mg(2+). The DECH box signature appears at 1316 to 1319; the sequence is DECH. An RNA-binding region spans residues 1486–1497; that stretch reads QRRGRTGRGRRG. The chain crosses the membrane as a helical span at residues 1658 to 1678; it reads STWVLVGGVLAALAAYCLTTG. Residues 1679–1690 are NS3-binding; that stretch reads SVVIVGRIILSG. The Cytoplasmic segment spans residues 1679–1805; it reads SVVIVGRIIL…SITSPLSTQN (127 aa). A helical transmembrane segment spans residues 1806-1824; sequence TLLFNIWGGWVAAQLAPPS. At 1825–1828 the chain is on the lumenal side; that stretch reads AASA. Residues 1829-1849 traverse the membrane as a helical segment; sequence FVGAGIAGAAVGSIGLGKVLV. D1850 is a topological domain (cytoplasmic). Residues 1851–1871 form a helical membrane-spanning segment; it reads ILAGYGAGVAGALVAFKIMSG. The Lumenal segment spans residues 1872–1881; that stretch reads EVPSTEDLVN. The helical transmembrane segment at 1882 to 1902 threads the bilayer; that stretch reads LLPAILSPGALVVGVVCAAIL. Over 1903 to 1972 the chain is Cytoplasmic; it reads RRHVGPGEGA…WINEDCSTPC (70 aa). S-palmitoyl cysteine; by host attachment occurs at residues C1968 and C1972. Residues 1973–2002 lie within the membrane without spanning it; the sequence is SGSWLRDVWDWICTVLTDFKTWLQSKLLPR. The Cytoplasmic segment spans residues 2003–2989; it reads LPGVPFFSCQ…YHSLSRARPR (987 aa). Residues C2011, C2029, C2031, and C2052 each coordinate Zn(2+). The segment at 2120–2208 is FKBP8-binding; the sequence is EFFTEVDGVR…ASSSASQLSA (89 aa). Residues 2120–2332 form a transcriptional activation region; it reads EFFTEVDGVR…PIPPPRRKRT (213 aa). Residues 2135-2139 are interaction with non-structural protein 4A; that stretch reads PACKP. Residues 2189-2441 are interaction with host SKP2; sequence RLARGSPPSL…PCAAEESKLP (253 aa). S2194 is modified (phosphoserine; by host; in p56). Residues S2197, S2201, S2204, S2207, and S2210 each carry the phosphoserine; by host; in p58 modification. Residues 2210-2249 are ISDR; it reads SLKATCTTHHDSPDVDLIEANLLWRQEMGGNITRVESENK. Positions 2210–2275 are interaction with EIF2AK2/PKR; it reads SLKATCTTHH…REPSVAAEIL (66 aa). The segment at 2249–2306 is NS4B-binding; that stretch reads KVVILDSFDPLRAEEDEREPSVAAEILRKTKRFPPAMPIWARPDYNPPLLESWKDPDY. The SH3-binding signature appears at 2322 to 2325; it reads PPIP. The Nuclear localization signal signature appears at 2326-2334; sequence PPRRKRTVV. A Glycyl lysine isopeptide (Lys-Gly) (interchain with G-Cter in ubiquitin) cross-link involves residue K2350. Over residues 2351 to 2365 the composition is skewed to polar residues; it reads TFGSSGSSAVDSGTA. The interval 2351–2407 is disordered; the sequence is TFGSSGSSAVDSGTATAPPDQASDDGDQGSDVESYSSMPPLEGEPGDPDLSDGSWST. The segment at 2354–2377 is V3; that stretch reads SSGSSAVDSGTATAPPDQASDDGD. A phosphoserine; by host mark is found at S2448 and S2461. Positions 2633–2751 constitute a RdRp catalytic domain; that stretch reads PMGFSYDTRC…ICESAGTQED (119 aa). Residues D2639, D2737, and D2738 each contribute to the Mg(2+) site. The chain crosses the membrane as a helical span at residues 2990 to 3010; sequence WFMLCLLLLSVGVGIYLLPNR.

The protein belongs to the hepacivirus polyprotein family. Homooligomer. Interacts with E1 (via C-terminus). Interacts with the non-structural protein 5A. Interacts (via N-terminus) with host STAT1 (via SH2 domain); this interaction results in decreased STAT1 phosphorylation and ubiquitin-mediated proteasome-dependent STAT1 degradation, leading to decreased IFN-stimulated gene transcription. Interacts with host STAT3; this interaction constitutively activates STAT3. Interacts with host LTBR receptor. Interacts with host TNFRSF1A receptor and possibly induces apoptosis. Interacts with host HNRPK. Interacts with host YWHAE. Interacts with host UBE3A/E6AP. Interacts with host DDX3X. Interacts with host APOA2. Interacts with host RXRA protein. Interacts with host SP110 isoform 3/Sp110b; this interaction sequesters the transcriptional corepressor SP110 away from the nucleus. Interacts with host CREB3 nuclear transcription protein; this interaction triggers cell transformation. Interacts with host ACY3. Interacts with host C1QR1. Interacts with host RBM24; this interaction, which enhances the interaction of the mature core protein with 5'-UTR, may inhibit viral translation and favor replication. Interacts with host EIF2AK2/PKR; this interaction induces the autophosphorylation of EIF2AK2. Part of the viral assembly initiation complex composed of NS2, E1, E2, NS3, NS4A, NS5A and the mature core protein. In terms of assembly, forms a heterodimer with envelope glycoprotein E2. Interacts with mature core protein. Interacts with protease NS2. The heterodimer E1/E2 interacts with host CLDN1; this interaction plays a role in viral entry into host cell. Interacts with host SPSB2 (via C-terminus). Part of the viral assembly initiation complex composed of NS2, E1, E2, NS3, NS4A, NS5A and the mature core protein. Interacts with host NEURL3; this interaction prevents E1 binding to glycoprotein E2. As to quaternary structure, forms a heterodimer with envelope glycoprotein E1. Interacts with host CD81 and SCARB1 receptors; these interactions play a role in viral entry into host cell. Interacts with host EIF2AK2/PKR; this interaction inhibits EIF2AK2 and probably allows the virus to evade the innate immune response. Interacts with host CD209/DC-SIGN and CLEC4M/DC-SIGNR. Interact with host SPCS1; this interaction is essential for viral particle assembly. Interacts with protease NS2. The heterodimer E1/E2 interacts with host CLDN1; this interaction plays a role in viral entry into host cell. Part of the viral assembly initiation complex composed of NS2, E1, E2, NS3, NS4A, NS5A and the mature core protein. Interacts with host SLC3A2/4F2hc; the interaction may facilitate viral entry into host cell. Interacts with human PLSCR1. Homohexamer. Homoheptamer. Interacts with protease NS2. In terms of assembly, homodimer. Interacts with host SPCS1; this interaction is essential for viral particle assembly. Interacts with envelope glycoprotein E1. Interacts with envelope glycoprotein E2. Interacts with viroporin p7. Interacts with serine protease/helicase NS3. Part of the replication complex composed of NS2, NS3, NS4A, NS4B, NS5A and the RNA-directed RNA polymerase embedded in an ER-derived membranous web. Part of the viral assembly initiation complex composed of NS2, E1, E2, NS3, NS4A, NS5A and the mature core protein. As to quaternary structure, interacts with protease NS2. Interacts with non-structural protein 4A; this interaction stabilizes the folding of NS3 serine protease. NS3-NS4A interaction is essential for NS3 activation and allows membrane anchorage of the latter. NS3/NS4A complex also prevents phosphorylation of host IRF3, thus preventing the establishment of dsRNA induced antiviral state. Interacts with host MAVS; this interaction leads to the cleavage and inhibition of host MAVS. Interacts with host TICAM1; this interaction leads to the cleavage and inhibition of host TICAM1. Interacts with host TANK-binding kinase/TBK1; this interaction results in the inhibition of the association between TBK1 and IRF3, which leads to the inhibition of IRF3 activation. Interacts with host RBM24. Part of the replication complex composed of NS2, NS3, NS4A, NS4B, NS5A and the RNA-directed RNA polymerase embedded in an ER-derived membranous web. Part of the viral assembly initiation complex composed of NS2, E1, E2, NS3, NS4A, NS5A and the mature core protein. Interacts with NS3 serine protease; this interaction stabilizes the folding of NS3 serine protease. NS3-NS4A interaction is essential for NS3 activation and allows membrane anchorage of the latter. Interacts with non-structural protein 5A (via N-terminus). Part of the replication complex composed of NS2, NS3, NS4A, NS4B, NS5A and the RNA-directed RNA polymerase embedded in an ER-derived membranous web. Part of the viral assembly initiation complex composed of NS2, E1, E2, NS3, NS4A, NS5A and the mature core protein. In terms of assembly, homomultimer. Interacts with non-structural protein NS5A. Interacts with host PLA2G4C; this interaction likely initiates the recruitment of replication complexes to lipid droplets. Interacts with host STING; this interaction disrupts the interaction between STING and TBK1 thereby suppressing the interferon signaling. Part of the replication complex composed of NS2, NS3, NS4A, NS4B, NS5A and the RNA-directed RNA polymerase embedded in an ER-derived membranous web. As to quaternary structure, monomer. Homodimer; dimerization is required for RNA-binding. Interacts with the mature core protein. Interacts (via N-terminus) with non-structural protein 4A. Interacts with non-structural protein 4B. Interacts (via region D2) with RNA-directed RNA polymerase. Part of the viral assembly initiation complex composed of NS2, E1, E2, NS3, NS4A, NS5A and the mature core protein. Part of the replication complex composed of NS2, NS3, NS4A, NS4B, NS5A and the RNA-directed RNA polymerase embedded in an ER-derived membranous web. Interacts with host GRB2. Interacts with host BIN1. Interacts with host PIK3R1. Interacts with host SRCAP. Interacts with host FKBP8. Interacts (via C-terminus) with host VAPB (via MSP domain). Interacts with host EIF2AK2/PKR; this interaction leads to disruption of EIF2AK2 dimerization by NS5A and probably allows the virus to evade the innate immune response. Interacts (via N-terminus) with host PACSIN2 (via N-terminus); this interaction attenuates protein kinase C alpha-mediated phosphorylation of PACSIN2 by disrupting the interaction between PACSIN2 and PRKCA. Interacts (via N-terminus) with host SRC kinase (via SH2 domain). Interacts with most Src-family kinases. Interacts with host IFI27 and SKP2; promotes the ubiquitin-mediated proteasomal degradation of NS5A. Interacts with host GPS2. Interacts with host TNFRSF21; this interaction allows the modulation by the virus of JNK, p38 MAPK, STAT3, and Akt signaling pathways in a DR6-dependent manner. Interacts (via N-terminus) with host CIDEB (via N-terminus); this interaction seems to regulate the association of HCV particles with APOE. Interacts with host CHKA/Choline Kinase-alpha; CHKA bridges host PI4KA and NS5A and potentiates NS5A-stimulated PI4KA activity, which then facilitates the targeting of the ternary complex to the ER for viral replication. Interacts with host SPSB2 (via C-terminus); this interaction targets NS5A for ubiquitination and degradation. Interacts with host RAB18; this interaction may promote the association of NS5A and other replicase components with lipid droplets. Interacts (via region D2) with host PPIA/CYPA; the interaction stimulates RNA-binding ability of NS5A and is dependent on the peptidyl-prolyl cis-trans isomerase activity of PPIA/CYPA. Interacts with host TRIM14; this interaction induces the degradation of NS5A. Homooligomer. Interacts with non-structural protein 5A. Interacts with host VAPB. Interacts with host PRK2/PKN2. Interacts with host HNRNPA1 and SEPT6; these interactions facilitate viral replication. Part of the replication complex composed of NS2, NS3, NS4A, NS4B, NS5A and the RNA-directed RNA polymerase. Zn(2+) serves as cofactor. Requires Mg(2+) as cofactor. In terms of processing, specific enzymatic cleavages in vivo yield mature proteins. The structural proteins, core, E1, E2 and p7 are produced by proteolytic processing by host signal peptidases. The core protein precursor is synthesized as a 23 kDa, which is retained in the ER membrane through the hydrophobic signal peptide. Cleavage by the signal peptidase releases the 21 kDa mature core protein. The cleavage of the core protein precursor occurs between aminoacids 176 and 188 but the exact cleavage site is not known. Some degraded forms of the core protein appear as well during the course of infection. The other proteins (p7, NS2, NS3, NS4A, NS4B, NS5A and NS5B) are cleaved by the viral proteases. Autoprocessing between NS2 and NS3 is mediated by the NS2 cysteine protease catalytic domain and regulated by the NS3 N-terminal domain. Phosphorylated by host PKC and PKA. Post-translationally, ubiquitinated; mediated by UBE3A and leading to core protein subsequent proteasomal degradation. In terms of processing, highly N-glycosylated. Palmitoylation is required for NS2/3 autoprocessing and E2 recruitment to membranes. Post-translationally, palmitoylated. This modification may play a role in its polymerization or in protein-protein interactions. In terms of processing, phosphorylated on serines in a basal form termed p56. p58 is a hyperphosphorylated form of p56. p56 and p58 coexist in the cell in roughly equivalent amounts. Hyperphosphorylation is dependent on the presence of NS4A. Host CSNK1A1/CKI-alpha or RPS6KB1 kinases may be responsible for NS5A phosphorylation. Tyrosine phosphorylation is essential for the interaction with host SRC. Post-translationally, ubiquitinated. Ubiquitination, most probably at Lys-2350, mediated by host IFI27 and SKP2 leads to proteasomal degradation, restricting viral infection. Ubiquitination by host TRIM22 leads to interruption of viral replication. In terms of processing, the N-terminus is phosphorylated by host PRK2/PKN2.

Its subcellular location is the host endoplasmic reticulum membrane. It is found in the host mitochondrion membrane. The protein localises to the virion. It localises to the host cytoplasm. The protein resides in the host nucleus. Its subcellular location is the host lipid droplet. It is found in the virion membrane. The protein localises to the host mitochondrion. It localises to the host cell membrane. The protein resides in the host perinuclear region. It carries out the reaction Hydrolysis of four peptide bonds in the viral precursor polyprotein, commonly with Asp or Glu in the P6 position, Cys or Thr in P1 and Ser or Ala in P1'.. The enzyme catalyses a ribonucleoside 5'-triphosphate + H2O = a ribonucleoside 5'-diphosphate + phosphate + H(+). The catalysed reaction is ATP + H2O = ADP + phosphate + H(+). It catalyses the reaction RNA(n) + a ribonucleoside 5'-triphosphate = RNA(n+1) + diphosphate. Inhibited by the antiviral drug hexamethylene amiloride. Inhibition by amantadine appears to be genotype-dependent. Also inhibited by long-alkyl-chain iminosugar derivatives. Its activity is regulated as follows. Activity is up-regulated by PRK2/PKN2-mediated phosphorylation. Its function is as follows. Packages viral RNA to form a viral nucleocapsid, and promotes virion budding. Participates in the viral particle production as a result of its interaction with the non-structural protein 5A. Binds RNA and may function as a RNA chaperone to induce the RNA structural rearrangements taking place during virus replication. Modulates viral translation initiation by interacting with viral IRES and 40S ribosomal subunit. Affects various cell signaling pathways, host immunity and lipid metabolism. Prevents the establishment of cellular antiviral state by blocking the interferon-alpha/beta (IFN-alpha/beta) and IFN-gamma signaling pathways and by blocking the formation of phosphorylated STAT1 and promoting ubiquitin-mediated proteasome-dependent degradation of STAT1. Activates STAT3 leading to cellular transformation. Regulates the activity of cellular genes, including c-myc and c-fos. May repress the promoter of p53, and sequester CREB3 and SP110 isoform 3/Sp110b in the cytoplasm. Represses cell cycle negative regulating factor CDKN1A, thereby interrupting an important check point of normal cell cycle regulation. Targets transcription factors involved in the regulation of inflammatory responses and in the immune response: suppresses TNF-induced NF-kappa-B activation, and activates AP-1. Binds to dendritic cells (DCs) via C1QR1, resulting in down-regulation of T-lymphocytes proliferation. Alters lipid metabolism by interacting with hepatocellular proteins involved in lipid accumulation and storage. Induces up-regulation of FAS promoter activity, and thereby contributes to the increased triglyceride accumulation in hepatocytes (steatosis). Forms a heterodimer with envelope glycoprotein E2, which mediates virus attachment to the host cell, virion internalization through clathrin-dependent endocytosis and fusion with host membrane. Fusion with the host cell is most likely mediated by both E1 and E2, through conformational rearrangements of the heterodimer required for fusion rather than a classical class II fusion mechanism. E1/E2 heterodimer binds host apolipoproteins such as APOB and APOE thereby forming a lipo-viro-particle (LVP). APOE associated to the LVP allows the initial virus attachment to cell surface receptors such as the heparan sulfate proteoglycans (HSPGs), syndecan-1 (SDC1), syndecan-1 (SDC2), the low-density lipoprotein receptor (LDLR) and scavenger receptor class B type I (SCARB1). The cholesterol transfer activity of SCARB1 allows E2 exposure and binding of E2 to SCARB1 and the tetraspanin CD81. E1/E2 heterodimer binding on CD81 activates the epithelial growth factor receptor (EGFR) signaling pathway. Diffusion of the complex E1-E2-EGFR-SCARB1-CD81 to the cell lateral membrane allows further interaction with Claudin 1 (CLDN1) and occludin (OCLN) to finally trigger HCV entry. Functionally, forms a heterodimer with envelope glycoprotein E1, which mediates virus attachment to the host cell, virion internalization through clathrin-dependent endocytosis and fusion with host membrane. Fusion with the host cell is most likely mediated by both E1 and E2, through conformational rearrangements of the heterodimer required for fusion rather than a classical class II fusion mechanism. The interaction between envelope glycoprotein E2 and host apolipoprotein E/APOE allows the proper assembly, maturation and infectivity of the viral particles. This interaction is probably promoted via the up-regulation of cellular autophagy by the virus. E1/E2 heterodimer binds host apolipoproteins such as APOB and APOE thereby forming a lipo-viro-particle (LVP). APOE associated to the LVP allows the initial virus attachment to cell surface receptors such as the heparan sulfate proteoglycans (HSPGs), syndecan-1 (SDC1), syndecan-1 (SDC2), the low-density lipoprotein receptor (LDLR) and scavenger receptor class B type I (SCARB1). The cholesterol transfer activity of SCARB1 allows E2 exposure and binding of E2 to SCARB1 and the tetraspanin CD81. E1/E2 heterodimer binding on CD81 activates the epithelial growth factor receptor (EGFR) signaling pathway. Diffusion of the complex E1-E2-EGFR-SCARB1-CD81 to the cell lateral membrane allows further interaction with Claudin 1 (CLDN1) and occludin (OCLN) to finally trigger HCV entry. Inhibits host EIF2AK2/PKR activation, preventing the establishment of an antiviral state. Viral ligand for CD209/DC-SIGN and CLEC4M/DC-SIGNR, which are respectively found on dendritic cells (DCs), and on liver sinusoidal endothelial cells and macrophage-like cells of lymph node sinuses. These interactions allow the capture of circulating HCV particles by these cells and subsequent facilitated transmission to permissive cells such as hepatocytes and lymphocyte subpopulations. The interaction between E2 and host amino acid transporter complex formed by SLC3A2 and SLC7A5/LAT1 may facilitate viral entry into host cell. In terms of biological role, ion channel protein that acts as a viroporin and plays an essential role in the assembly, envelopment and secretion of viral particles. Regulates the host cell secretory pathway, which induces the intracellular retention of viral glycoproteins and favors assembly of viral particles. Creates a pore in acidic organelles and releases Ca(2+) and H(+) in the cytoplasm of infected cells, leading to a productive viral infection. High levels of cytoplasmic Ca(2+) may trigger membrane trafficking and transport of viral ER-associated proteins to viroplasms, sites of viral genome replication. This ionic imbalance induces the assembly of the inflammasome complex, which triggers the maturation of pro-IL-1beta into IL-1beta through the action of caspase-1. Targets also host mitochondria and induces mitochondrial depolarization. In addition of its role as a viroporin, acts as a lipid raft adhesion factor. Its function is as follows. Cysteine protease required for the proteolytic auto-cleavage between the non-structural proteins NS2 and NS3. The N-terminus of NS3 is required for the function of NS2 protease (active region NS2-3). Promotes the initiation of viral particle assembly by mediating the interaction between structural and non-structural proteins. Displays three enzymatic activities: serine protease with a chymotrypsin-like fold, NTPase and RNA helicase. NS3 serine protease, in association with NS4A, is responsible for the cleavages of NS3-NS4A, NS4A-NS4B, NS4B-NS5A and NS5A-NS5B. The NS3/NS4A complex prevents phosphorylation of host IRF3, thus preventing the establishment of dsRNA induced antiviral state. The NS3/NS4A complex induces host amino acid transporter component SLC3A2, thus contributing to HCV propagation. NS3 RNA helicase binds to RNA and unwinds both dsDNA and dsRNA in the 3' to 5' direction, and likely resolves RNA complicated stable secondary structures in the template strand. Binds a single ATP and catalyzes the unzipping of a single base pair of dsRNA. Inhibits host antiviral proteins TBK1 and IRF3 thereby preventing the establishment of an antiviral state. Cleaves host MAVS/CARDIF thereby preventing the establishment of an antiviral state. Cleaves host TICAM1/TRIF, thereby disrupting TLR3 signaling and preventing the establishment of an antiviral state. Functionally, peptide cofactor which forms a non-covalent complex with the N-terminal of NS3 serine protease. The NS3/NS4A complex prevents phosphorylation of host IRF3, thus preventing the establishment of dsRNA induced antiviral state. The NS3/NS4A complex induces host amino acid transporter component SLC3A2, thus contributing to HCV propagation. In terms of biological role, induces a specific membrane alteration that serves as a scaffold for the virus replication complex. This membrane alteration gives rise to the so-called ER-derived membranous web that contains the replication complex. NS4B self-interaction contributes to its function in membranous web formation. Promotes host TRIF protein degradation in a CASP8-dependent manner thereby inhibiting host TLR3-mediated interferon signaling. Disrupts the interaction between STING and TBK1 contributing to the inhibition of interferon signaling. Its function is as follows. Phosphorylated protein that is indispensable for viral replication and assembly. Both hypo- and hyperphosphorylated states are required for the viral life cycle. The hyperphosphorylated form of NS5A is an inhibitor of viral replication. Involved in RNA-binding and especially in binding to the viral genome. Zinc is essential for RNA-binding. Participates in the viral particle production as a result of its interaction with the mature viral core protein. Its interaction with host VAPB may target the viral replication complex to vesicles. Down-regulates viral IRES translation initiation. Mediates interferon resistance, presumably by interacting with and inhibiting host EIF2AK2/PKR. Prevents BIN1-induced apoptosis. Acts as a transcriptional activator of some host genes important for viral replication when localized in the nucleus. Via the interaction with host PACSIN2, modulates lipid droplet formation in order to promote virion assembly. Modulates TNFRSF21/DR6 signaling pathway for viral propagation. RNA-dependent RNA polymerase that performs primer-template recognition and RNA synthesis during viral replication. Initiates RNA transcription/replication at a flavin adenine dinucleotide (FAD), resulting in a 5'- FAD cap on viral RNAs. In this way, recognition of viral 5' RNA by host pattern recognition receptors can be bypassed, thereby evading activation of antiviral pathways. The polypeptide is Genome polyprotein (Homo sapiens (Human)).